A 224-amino-acid polypeptide reads, in one-letter code: Ribonuclease HII (224 aa).

The RNase H type-2 domain maps to 17–201; the sequence is GTVIGVDEAG…VLSNLSVKKV (185 aa). The a divalent metal cation site is built by Asp23, Glu24, and Asp111.

It belongs to the RNase HII family. The cofactor is Mn(2+). Requires Mg(2+) as cofactor.

It is found in the cytoplasm. The enzyme catalyses Endonucleolytic cleavage to 5'-phosphomonoester.. Its function is as follows. Endonuclease that specifically degrades the RNA of RNA-DNA hybrids. This chain is Ribonuclease HII, found in Pseudothermotoga lettingae (strain ATCC BAA-301 / DSM 14385 / NBRC 107922 / TMO) (Thermotoga lettingae).